The sequence spans 449 residues: AP-4 complex subunit mu-1 (449 aa).

The MHD domain maps to 184 to 448 (KNEVFLDVVE…LSHSNAYVIR (265 aa)).

It belongs to the adaptor complexes medium subunit family. As to quaternary structure, adaptor protein complex 4 (AP-4) is a heterotetramer composed of two large adaptins (epsilon-type subunit AP4E1 and beta-type subunit AP4B1), a medium adaptin (mu-type subunit AP4M1) and a small adaptin (sigma-type AP4S1). Interacts with tyrosine-based sorting signals on the cytoplasmic tail of cargo proteins such as APP, ATG9A, LAMP2 and NAGPA. Interacts with the C-terminal domain of GRID2. Interacts with GRIA1 and GRIA2; the interaction is indirect via CACNG3. Interacts with CACNG3; CACNG3 associates GRIA1 and GRIA2 with the adaptor protein complex 4 (AP-4) to target them to the somatodendritic compartment of neurons. Interacts with HOOK1 and HOOK2; the interactions are direct, mediate the interaction between FTS-Hook-FHIP (FHF) complex and AP-4 and the perinuclear distribution of AP-4.

The protein resides in the golgi apparatus. Its subcellular location is the trans-Golgi network membrane. It is found in the early endosome. Component of the adaptor protein complex 4 (AP-4). Adaptor protein complexes are vesicle coat components involved both in vesicle formation and cargo selection. They control the vesicular transport of proteins in different trafficking pathways. AP-4 forms a non clathrin-associated coat on vesicles departing the trans-Golgi network (TGN) and may be involved in the targeting of proteins from the trans-Golgi network (TGN) to the endosomal-lysosomal system. It is also involved in protein sorting to the basolateral membrane in epithelial cells and the proper asymmetric localization of somatodendritic proteins in neurons. Within AP-4, the mu-type subunit AP4M1 is directly involved in the recognition and binding of tyrosine-based sorting signals found in the cytoplasmic part of cargos. The adaptor protein complex 4 (AP-4) may also recognize other types of sorting signal. This chain is AP-4 complex subunit mu-1, found in Mus musculus (Mouse).